A 463-amino-acid chain; its full sequence is Xanthone prenyltransferase B (463 aa).

It belongs to the tryptophan dimethylallyltransferase family.

Its pathway is secondary metabolite biosynthesis. With respect to regulation, mn(2+) and Co(2+) strongly enhance prenylation activity. Its function is as follows. Dehydrogenase involved in the conversion of monodictyphenone to the prenyl xanthones such as emericellin, shamixanthone and epishamixanthone. Monodictyphenone is first converted to variecoxanthone A via a paeciloxanthone intermediate by the consecutive actions of the FAD-dependent monooxygenase mdpD and the xanthone prenyltransferase xptB. XptB catalyzes regular O-prenylation at the hydroxy group of C-7 of the xanthone ring. Variecoxanthone A is further prenylated to emericellin by xptA before being reduced to shamixanthone and epishamixanthone by the dehydrogenase xptC. This Emericella nidulans (strain FGSC A4 / ATCC 38163 / CBS 112.46 / NRRL 194 / M139) (Aspergillus nidulans) protein is Xanthone prenyltransferase B.